A 160-amino-acid chain; its full sequence is Probable nucleoside diphosphate kinase DDB_G0292928 (160 aa).

Residues Lys-12, Phe-61, Arg-103, Thr-109, Arg-122, and Asn-132 each coordinate ATP. His-135 acts as the Pros-phosphohistidine intermediate in catalysis.

It belongs to the NDK family. The cofactor is Mg(2+).

It carries out the reaction a 2'-deoxyribonucleoside 5'-diphosphate + ATP = a 2'-deoxyribonucleoside 5'-triphosphate + ADP. It catalyses the reaction a ribonucleoside 5'-diphosphate + ATP = a ribonucleoside 5'-triphosphate + ADP. This Dictyostelium discoideum (Social amoeba) protein is Probable nucleoside diphosphate kinase DDB_G0292928.